Reading from the N-terminus, the 409-residue chain is MARAKFERTKPHVNIGTIGHVDHGKTTLTAAITMTLAALGQAVAKGYDQIDNAPEEKARGITINTAHVEYETANRHYAHVDCPGHADYVKNMITGAAQMDGAILVVAATDGPMPQTREHILLAKQVGVPKLVVFLNKEDMMEDAELLELVELELRELLTEYEFDGDDIPIVRGSGLQALEVMTKNPKTQRGENPWVDKIYELMDAVDSYIPDPERDIDKPFLMAVEDVFSITGRGTVATGRIERGKVKVGDVVELVGIRDTRNTTVTGIEMFKKSLDEGMAGDNAGVLLRGIQKADIERGMVLAKPGSITPHTQFEGEVYVLTEKEGGRKTPFFAGYRPQFYVRTTDVTGTIKAFTSDEGETVEMVMPGDRIKVTVELINPIAIEQGMRFAIREGGRTIGAGVVSKIVK.

The 205-residue stretch at 10–214 (KPHVNIGTIG…AVDSYIPDPE (205 aa)) folds into the tr-type G domain. A G1 region spans residues 19-26 (GHVDHGKT). Position 19-26 (19-26 (GHVDHGKT)) interacts with GTP. T26 is a binding site for Mg(2+). The G2 stretch occupies residues 60-64 (GITIN). Residues 81–84 (DCPG) are G3. Residues 81-85 (DCPGH) and 136-139 (NKED) contribute to the GTP site. The segment at 136-139 (NKED) is G4. Positions 174–176 (SGL) are G5.

Monomer.

Its subcellular location is the cytoplasm. The catalysed reaction is GTP + H2O = GDP + phosphate + H(+). GTP hydrolase that promotes the GTP-dependent binding of aminoacyl-tRNA to the A-site of ribosomes during protein biosynthesis. The chain is Elongation factor Tu from Nostoc sp. (strain PCC 7120 / SAG 25.82 / UTEX 2576).